The primary structure comprises 475 residues: Ankyrin repeat, SAM and basic leucine zipper domain-containing protein 1 (475 aa).

A disordered region spans residues Met1 to Asp22. Ser17, Ser18, and Ser20 each carry phosphoserine. ANK repeat units lie at residues Glu45–Ser74, Tyr78–Phe107, Asp110–Val144, Arg148–Thr177, Asn181–Leu210, and Asp214–Gly243. The 63-residue stretch at Ser272–Gln334 folds into the SAM domain.

Interacts with DDX4, PIWIL1, RANBP9 and TDRD1.

It localises to the cytoplasm. Functionally, plays a central role during spermatogenesis by repressing transposable elements and preventing their mobilization, which is essential for the germline integrity. Acts via the piRNA metabolic process, which mediates the repression of transposable elements during meiosis by forming complexes composed of piRNAs and Piwi proteins and governs the methylation and subsequent repression of transposons. Its association with pi-bodies suggests a participation in the primary piRNAs metabolic process. Required prior to the pachytene stage to facilitate the production of multiple types of piRNAs, including those associated with repeats involved in the regulation of retrotransposons. May act by mediating protein-protein interactions during germ cell maturation. The protein is Ankyrin repeat, SAM and basic leucine zipper domain-containing protein 1 (ASZ1) of Colobus guereza (Mantled guereza).